Reading from the N-terminus, the 483-residue chain is Dual specificity protein phosphatase CDC14C (483 aa).

The segment at 1–45 is disordered; that stretch reads MKRKSEGRSSWAAATCSPCCSLTSPSVKKIRSPTQQDPRHRDPQD. The short motif at 1–53 is the Nucleolar localization signal element; sequence MKRKSEGRSSWAAATCSPCCSLTSPSVKKIRSPTQQDPRHRDPQDDVYLDITD. The span at 12–26 shows a compositional bias: low complexity; it reads AAATCSPCCSLTSPS. Residues 43–197 form an a region; it reads PQDDVYLDIT…AMQYGFLNFN (155 aa). Residues 198–211 are linker; the sequence is SFNLDEYEHYEKAE. Residues 212–378 form a b region; it reads NGDLNWIIPD…EGDYFCQKLK (167 aa). Residues 213–373 enclose the Tyrosine-protein phosphatase domain; that stretch reads GDLNWIIPDR…TSLWLEGDYF (161 aa). Cys-313 functions as the Phosphocysteine intermediate in the catalytic mechanism. Residues 407–426 are disordered; it reads QDQQEPEPYSDDDEINGGTQ. The span at 408–421 shows a compositional bias: acidic residues; that stretch reads DQQEPEPYSDDDEI. The helical transmembrane segment at 444 to 466 threads the bilayer; the sequence is ILLTCPLAVLTSALCSVVIWWIV.

The protein belongs to the protein-tyrosine phosphatase family. Non-receptor class CDC14 subfamily.

Its subcellular location is the membrane. The protein resides in the nucleus. The protein localises to the nucleolus. It localises to the cytoplasm. It is found in the cytoskeleton. The enzyme catalyses O-phospho-L-tyrosyl-[protein] + H2O = L-tyrosyl-[protein] + phosphate. The catalysed reaction is O-phospho-L-seryl-[protein] + H2O = L-seryl-[protein] + phosphate. It catalyses the reaction O-phospho-L-threonyl-[protein] + H2O = L-threonyl-[protein] + phosphate. Dual-specificity phosphatase. Preferentially dephosphorylates proteins modified by proline-directed kinases. The protein is Dual specificity protein phosphatase CDC14C of Symphalangus syndactylus (Siamang).